The chain runs to 363 residues: Flagellar P-ring protein (363 aa).

A signal peptide spans 1-20 (MKYRLIVALAMLVLSLPSQA).

Belongs to the FlgI family. The basal body constitutes a major portion of the flagellar organelle and consists of four rings (L,P,S, and M) mounted on a central rod.

The protein resides in the periplasm. It is found in the bacterial flagellum basal body. In terms of biological role, assembles around the rod to form the L-ring and probably protects the motor/basal body from shearing forces during rotation. In Shewanella sp. (strain ANA-3), this protein is Flagellar P-ring protein.